The chain runs to 173 residues: Photosystem I assembly protein Ycf3 (173 aa).

3 TPR repeats span residues 35 to 68, 72 to 105, and 120 to 153; these read AFVYYRDGMSAQADGEYKEALDNYYEALKLEDDA, SYILYNIGIIHGSNGEHERALEYYHEAIELNPNL, and GERAKEEGREDESEALFDKAAEYWKQAIRLAPNN.

Belongs to the Ycf3 family.

The protein resides in the cellular thylakoid membrane. Functionally, essential for the assembly of the photosystem I (PSI) complex. May act as a chaperone-like factor to guide the assembly of the PSI subunits. This is Photosystem I assembly protein Ycf3 from Gloeothece citriformis (strain PCC 7424) (Cyanothece sp. (strain PCC 7424)).